Reading from the N-terminus, the 422-residue chain is F-box/FBD/LRR-repeat protein At5g56420 (422 aa).

The region spanning 5–54 is the F-box domain; it reads RDRLSQLPDDFLLQILSWLPTKDVLVTSLLSKRWRFLWTLVPRLNYDLRL. LRR repeat units follow at residues 59 to 85, 136 to 163, 164 to 189, 193 to 212, 214 to 238, 279 to 304, and 305 to 330; these read CPRF…NIKI, VLKL…HLLD, VKYL…VVQR, DNVK…SLHK, SQAF…DIED, LCLI…ELCT, and CAPR…KLRQ. An FBD domain is found at 342–391; the sequence is SWKQPALPKCLLFHLETFKWELYEGSQKQKEVATFILKHAIRLKTAIISP.

This Arabidopsis thaliana (Mouse-ear cress) protein is F-box/FBD/LRR-repeat protein At5g56420.